A 274-amino-acid polypeptide reads, in one-letter code: Large ribosomal subunit protein uL2 (274 aa).

The segment at 197 to 274 (NSDHALEKSG…SKYIIERRKK (78 aa)) is disordered. 2 stretches are compositionally biased toward basic residues: residues 207-220 (KAGR…RPHN) and 244-274 (PRSR…RRKK).

This sequence belongs to the universal ribosomal protein uL2 family. As to quaternary structure, part of the 50S ribosomal subunit. Forms a bridge to the 30S subunit in the 70S ribosome.

In terms of biological role, one of the primary rRNA binding proteins. Required for association of the 30S and 50S subunits to form the 70S ribosome, for tRNA binding and peptide bond formation. It has been suggested to have peptidyltransferase activity; this is somewhat controversial. Makes several contacts with the 16S rRNA in the 70S ribosome. In Porphyromonas gingivalis (strain ATCC BAA-308 / W83), this protein is Large ribosomal subunit protein uL2.